Here is a 134-residue protein sequence, read N- to C-terminus: Ribonuclease VapC1 (134 aa).

The region spanning 3–132 is the PINc domain; the sequence is YMLDTNIIIY…RITDLQWQDW (130 aa). D6 and D99 together coordinate Mg(2+).

Belongs to the PINc/VapC protein family. As to quaternary structure, forms a complex with VapB1. It depends on Mg(2+) as a cofactor.

In terms of biological role, toxic component of a type II toxin-antitoxin (TA) system. Upon expression in E.coli inhibits growth in liquid culture. Its toxic effect is neutralized by coexpression with antitoxin VapB1. Degrades RNA but not ss- or ds-DNA in vitro, degradation is inhibited by VapB1 antitoxin. The protein is Ribonuclease VapC1 of Haemophilus influenzae (strain R2866).